A 1010-amino-acid chain; its full sequence is Probable LRR receptor-like serine/threonine-protein kinase At3g47570 (1010 aa).

The N-terminal stretch at 1–19 is a signal peptide; that stretch reads MRLFLLLAFNALMLLETHG. Topologically, residues 20 to 645 are extracellular; that stretch reads FTDETDRQAL…SSRLKKVVIG (626 aa). N-linked (GlcNAc...) asparagine glycans are attached at residues N48 and N88. LRR repeat units lie at residues 89–113, 114–137, 139–161, 162–185, 186–209, 211–233, 234–258, 259–282, 283–307, and 310–333; these read LSFL…VGQL, SRLE…LYNC, RLLN…LGSL, TNLV…LGNL, TLLE…VAQL, QIWS…LYNL, SSLK…GILL, PNLL…LSNI, STLE…NVPN, and LLFL…TSLT. N-linked (GlcNAc...) asparagine glycosylation occurs at N136. N184 carries an N-linked (GlcNAc...) asparagine glycan. Residues N221 and N232 are each glycosylated (N-linked (GlcNAc...) asparagine). N-linked (GlcNAc...) asparagine glycans are attached at residues N281 and N294. Residues N334 and N358 are each glycosylated (N-linked (GlcNAc...) asparagine). 11 LRR repeats span residues 335-359, 361-384, 385-408, 410-432, 433-455, 457-480, 481-504, 505-528, 530-551, 552-574, and 575-600; these read CTQL…IANL, AKLV…IGNL, INLQ…LGKL, NLRY…IGNM, TMLE…SLGN, SHLL…IMKI, QQLL…IGAL, QNLG…LGNC, TMES…LKGL, VGVK…YFAS, and FSKL…IFEN. N-linked (GlcNAc...) asparagine glycosylation is found at N431, N455, and N470. 2 N-linked (GlcNAc...) asparagine glycosylation sites follow: N582 and N600. Residues 646-666 traverse the membrane as a helical segment; that stretch reads VSVGITLLLLLFMASVTLIWL. Over 667 to 1010 the chain is Cytoplasmic; it reads RKRKKNKETN…FFKASRTTWR (344 aa). At T699 the chain carries Phosphothreonine. One can recognise a Protein kinase domain in the interval 702–1002; that stretch reads FSSSNMVGSG…ELISIRERFF (301 aa). ATP-binding positions include 708 to 716 and K731; that span reads VGSGSFGTV. 2 positions are modified to phosphotyrosine: Y781 and Y826. D839 functions as the Proton acceptor in the catalytic mechanism. Y887 bears the Phosphotyrosine mark.

It belongs to the protein kinase superfamily. Ser/Thr protein kinase family.

Its subcellular location is the cell membrane. The enzyme catalyses L-seryl-[protein] + ATP = O-phospho-L-seryl-[protein] + ADP + H(+). The catalysed reaction is L-threonyl-[protein] + ATP = O-phospho-L-threonyl-[protein] + ADP + H(+). The protein is Probable LRR receptor-like serine/threonine-protein kinase At3g47570 of Arabidopsis thaliana (Mouse-ear cress).